The sequence spans 122 residues: Large ribosomal subunit protein uL14c (122 aa).

This sequence belongs to the universal ribosomal protein uL14 family. In terms of assembly, part of the 50S ribosomal subunit.

The protein localises to the plastid. It localises to the chloroplast. Functionally, binds to 23S rRNA. This chain is Large ribosomal subunit protein uL14c, found in Drimys granadensis.